The sequence spans 216 residues: HTH-type transcriptional regulator EthR (216 aa).

Residues 1–10 (MTTSAASQAS) show a composition bias toward polar residues. The segment at 1–24 (MTTSAASQASLPRGRRTARPSGDD) is disordered. Residues 23–83 (DDRELAILAT…TLLDRVVNQA (61 aa)) enclose the HTH tetR-type domain. A DNA-binding region (H-T-H motif) is located at residues 46-65 (SVDDLAKGAGISRPTFYFYF).

As to quaternary structure, homodimer.

In terms of biological role, involved in the repression of the monooxygenase EthA which is responsible of the formation of the active metabolite of ethionamide (ETH). The protein is HTH-type transcriptional regulator EthR (ethR) of Mycobacterium bovis (strain ATCC BAA-935 / AF2122/97).